Here is a 406-residue protein sequence, read N- to C-terminus: MQTLETPKPLTNTSPEFDTTIHRRQTRPVKVGDITIGGGYPVVVQSMINEDTLDIEGSVAGIRRLHEIGCEIVRVTVPSMAHAKALAEINQKLAEVYRRVPLVADVHHNGLKIALEVAKHVDKVRINPGLYVFEKPSTTRSEYTQAEFDEIGEKISETLKPLVVSLRDQGKAMRIGVNHGSLAERMLFTYGDTPEGMVESALEFIRICESLDFRNLVISLKASRVPVMLAAYRLMVKRMDELGMDYPLHLGVTEAGDGEYGRIKSTAGIATLLAEGIGDTIRVSLTEAPEKEIPVCYSILQALGLRKTMVEYVACPSCGRTLFNLEEVLHKVREATKHLTGLDIAVMGCIVNGPGEMADADYGYVGKQAGYISLYRGREEIKRVPEDQGVQELIELIKADGRWVEP.

The [4Fe-4S] cluster site is built by C315, C318, C349, and E356.

It belongs to the IspG family. It depends on [4Fe-4S] cluster as a cofactor.

The enzyme catalyses (2E)-4-hydroxy-3-methylbut-2-enyl diphosphate + 2 oxidized [2Fe-2S]-[ferredoxin] + H2O = 2-C-methyl-D-erythritol 2,4-cyclic diphosphate + 2 reduced [2Fe-2S]-[ferredoxin] + H(+). The protein operates within isoprenoid biosynthesis; isopentenyl diphosphate biosynthesis via DXP pathway; isopentenyl diphosphate from 1-deoxy-D-xylulose 5-phosphate: step 5/6. Functionally, converts 2C-methyl-D-erythritol 2,4-cyclodiphosphate (ME-2,4cPP) into 1-hydroxy-2-methyl-2-(E)-butenyl 4-diphosphate. The protein is 4-hydroxy-3-methylbut-2-en-1-yl diphosphate synthase (ferredoxin) of Rippkaea orientalis (strain PCC 8801 / RF-1) (Cyanothece sp. (strain PCC 8801)).